Here is a 647-residue protein sequence, read N- to C-terminus: Chaperone protein HtpG (647 aa).

Positions 1-353 are a; substrate-binding; it reads MNAHVEQLEF…AQDMSLNVSR (353 aa). A b region spans residues 354 to 567; sequence EILQQDRQIK…AFGMTPALAR (214 aa). The interval 568 to 647 is c; it reads IYRASGQEVP…LLAERLARTL (80 aa).

This sequence belongs to the heat shock protein 90 family. In terms of assembly, homodimer.

It localises to the cytoplasm. Molecular chaperone. Has ATPase activity. The sequence is that of Chaperone protein HtpG from Mycobacterium bovis (strain ATCC BAA-935 / AF2122/97).